Consider the following 1481-residue polypeptide: ABC multidrug transporter atrH (1481 aa).

Residues 1–10 (MALPREERSL) show a composition bias toward basic and acidic residues. Disordered stretches follow at residues 1–45 (MALP…GIEQ) and 61–89 (ISQT…SDQF). N-linked (GlcNAc...) asparagine glycosylation is found at asparagine 19, asparagine 76, and asparagine 320. An ABC transporter 1 domain is found at 134–396 (ATVSNVWLKA…FIEMGFDCPE (263 aa)). Residues 507-527 (MTLSTVIGNSILALIISSVFY) traverse the membrane as a helical segment. An N-linked (GlcNAc...) asparagine glycan is attached at asparagine 530. 5 consecutive transmembrane segments (helical) span residues 542-562 (LLFF…LTLW), 587-607 (LIVD…ILYF), 616-636 (GHFF…SNVF), 650-670 (EVPA…TIPV), and 758-778 (FGIL…ASEL). Residues 838 to 1081 (FHWQDVCYDI…LIKYFEDKGS (244 aa)) form the ABC transporter 2 domain. 874–881 (GVTGAGKT) is an ATP binding site. Helical transmembrane passes span 1174–1194 (YIYA…FTFW), 1210–1230 (IFML…YFAM), 1249–1269 (AFML…AVPA), 1298–1318 (LLVL…IAGI), 1327–1347 (IAQL…SPDV), and 1358–1378 (ASPF…GAPV). An N-linked (GlcNAc...) asparagine glycan is attached at asparagine 1395. The helical transmembrane segment at 1446–1466 (VGILFVYIVFNTVAAVFLYWL) threads the bilayer.

Belongs to the ABC transporter superfamily. ABCG family. PDR (TC 3.A.1.205) subfamily.

The protein resides in the cell membrane. Functionally, pleiotropic ABC efflux transporter involved in the basal level of azole susceptibility. This Aspergillus oryzae (strain ATCC 42149 / RIB 40) (Yellow koji mold) protein is ABC multidrug transporter atrH.